The chain runs to 307 residues: Barttin (307 aa).

At 1 to 5 (MADEK) the chain is on the cytoplasmic side. The interval 1–72 (MADEKTFRIG…VPADSDFQGI (72 aa)) is regulates channel membrane trafficking and anion conductance. Residues 6–26 (TFRIGFIVLGLFLLSLGTFLM) form a helical membrane-spanning segment. Residues 27 to 32 (SHDRPQ) are Extracellular-facing. Residues 33–53 (VYGTFYAMGSVMVIGGVIWSM) traverse the membrane as a helical segment. Residues Cys54 and Cys56 are each lipidated (S-palmitoyl cysteine). The Cytoplasmic portion of the chain corresponds to 54-307 (CQCYPKITFV…ELGFEPDIQG (254 aa)). Phosphoserine is present on residues Ser79 and Ser107. Disordered stretches follow at residues 135–154 (TGASSVREGEPRTAQAWMEA) and 161–224 (GSDE…RGPL). Residues 161–171 (GSDENEGEKSH) show a composition bias toward basic and acidic residues. Residue Ser162 is modified to Phosphoserine. Over residues 172 to 183 (SQSSPSVGPQGS) the composition is skewed to low complexity. Over residues 198–207 (SEGSSLQPSP) the composition is skewed to polar residues. Phosphoserine occurs at positions 228 and 289. The disordered stretch occupies residues 255–307 (RKQQWSLRMKGETVQARAEEPEQEEEDLYYGLPDSPGNPLPDKELGFEPDIQG).

In terms of assembly, interacts with CLCNK channels. Forms probably heteromers with CLCNKA in the thin ascending limb of Henle and with CLCNKB in the thick ascending limb and more distal segments. Post-translationally, palmitoylation is necessary for activation of plasma membrane-inserted CLC-K/barttin channels. As to expression, expression is evident in inner and outer stripes of the outer medulla of the kidney, most probably representing thin limbs of Henle's loop together with some collecting duct coursing through the outer stripe. In situ hybridization in fetal kidney at 18.5 dpc revealed a clear continuity between hybridization signals from the thin limb of Henle's loop and the distal convoluted tubule, suggesting that part of the expression pattern may result from expression in the thick ascending limb of Henle's loop. In addition, strong signals are present in a subset of cortical tubules, representing distal convoluted tubules or cortical collecting duct. Strong expression is also observed in the inner medulla of the kidney. This expression does not extend all the way to the tip of the papilla. Thus this signal most probably represents cells of the thin ascending limbs. In the inner ear, strong and exclusive expression is detected in marginal cells of the stria vascularis. In addition to cochlear signal, expression is observed in dark cells localized at the base of the crista ampullaris of the vestibular organ.

The protein resides in the basolateral cell membrane. Functionally, regulatory subunit of anion-selective CLCNKA:BSND and CLCNKB:BSND heteromeric channels involved in basolateral chloride conductance along the nephron to achieve urine concentration and maintain systemic acid-base homeostasis, and in the stria vascularis of the inner ear to establish the endocochlear potential necessary for normal hearing. Most likely acts as a chaperone that allosterically regulates proper sorting of CLCNKA:BSND and CLCNKB:BSND channels at the basolateral plasma membrane domain and functional switch to ion conducting state. Mediates constitutive opening of channel common gates. This Mus musculus (Mouse) protein is Barttin.